The sequence spans 324 residues: MTENYQDDTLRIFSLNANRPLAEKIAASVGTELGKSTVRQFSDGEIQINIEESIRGDHVYIIQATNAPVNDHLMELLILIDALKRASAKTVNVILPYYGYARQDRTAKPREPITAKLVANMLVEAGATRLLTLDLHTVQVQGFFDIPVDNLFTMPLFAHYYRQQALVGEEIVIVSPKNSGVQRARSLSEYLDATLAIVDHEEIDGVRQEGYVIGNVAGKKCILVDDILNTGQTLATAAEVLMKNGAQEVYACASHGLLSEGAKATLENAPIKEISITDSVYTTADRQPATLNIISCAELMGEALLRIHENKPMSPLFRLEPKGE.

Residues 43-45 and 102-103 contribute to the ATP site; these read DGE and RQ. Position 136 (His-136) interacts with Mg(2+). Residues Asp-225 and 229–233 each bind D-ribose 5-phosphate; that span reads NTGQT.

It belongs to the ribose-phosphate pyrophosphokinase family. Class I subfamily. In terms of assembly, homohexamer. Requires Mg(2+) as cofactor.

Its subcellular location is the cytoplasm. The enzyme catalyses D-ribose 5-phosphate + ATP = 5-phospho-alpha-D-ribose 1-diphosphate + AMP + H(+). It participates in metabolic intermediate biosynthesis; 5-phospho-alpha-D-ribose 1-diphosphate biosynthesis; 5-phospho-alpha-D-ribose 1-diphosphate from D-ribose 5-phosphate (route I): step 1/1. Involved in the biosynthesis of the central metabolite phospho-alpha-D-ribosyl-1-pyrophosphate (PRPP) via the transfer of pyrophosphoryl group from ATP to 1-hydroxyl of ribose-5-phosphate (Rib-5-P). In Enterococcus faecalis (strain ATCC 700802 / V583), this protein is Putative ribose-phosphate pyrophosphokinase 1.